We begin with the raw amino-acid sequence, 413 residues long: Isobutyryl-CoA dehydrogenase, mitochondrial (413 aa).

A mitochondrion-targeting transit peptide spans 1–20 (MAMLRSGYRRFGCLRAALKS). Residue Lys48 is modified to N6-acetyllysine; alternate. The residue at position 48 (Lys48) is an N6-succinyllysine; alternate. FAD is bound by residues 156 to 165 (YCLTEPGSGS) and 189 to 191 (FIS). Ser165 is a substrate binding site. Lys211 carries the post-translational modification N6-succinyllysine. Lys229 carries the N6-acetyllysine modification. Lys269 carries the N6-succinyllysine modification. Residue 272-275 (NGGR) participates in substrate binding. FAD contacts are provided by residues Arg300, 310-311 (SQ), and 369-373 (QMHGG). The active-site Proton acceptor is Glu396. 398–400 (SNE) contributes to the FAD binding site. Arg408 serves as a coordination point for substrate.

It belongs to the acyl-CoA dehydrogenase family. Homotetramer, formed by a dimer of dimers. FAD is required as a cofactor.

Its subcellular location is the mitochondrion. It carries out the reaction 2-methylpropanoyl-CoA + oxidized [electron-transfer flavoprotein] + H(+) = 2-methylpropenoyl-CoA + reduced [electron-transfer flavoprotein]. It catalyses the reaction (2S)-2-methylbutanoyl-CoA + oxidized [electron-transfer flavoprotein] + H(+) = (2E)-2-methylbut-2-enoyl-CoA + reduced [electron-transfer flavoprotein]. The catalysed reaction is propanoyl-CoA + oxidized [electron-transfer flavoprotein] + H(+) = acryloyl-CoA + reduced [electron-transfer flavoprotein]. Its pathway is amino-acid degradation; L-valine degradation. Functionally, isobutyryl-CoA dehydrogenase which catalyzes the conversion of 2-methylpropanoyl-CoA to (2E)-2-methylpropenoyl-CoA in the valine catabolic pathway. To a lesser extent, also able to catalyze the oxidation of (2S)-2-methylbutanoyl-CoA. The chain is Isobutyryl-CoA dehydrogenase, mitochondrial from Mus musculus (Mouse).